We begin with the raw amino-acid sequence, 162 residues long: MNTTRHRLLATASRFVETLESLDVDAMLAIRSSTCLHHMCCPSFRNYSITNDQTREAFPQWKATITKYKFGVLDDSQILVDEQARKVMIHAETAAETTVGDYNNEYVFILRMAEDCNTVDEIWEFYDTIRLQDLRHRLEASHVPIGVDAPAPFTTTASPAAL.

Belongs to the trt14 isomerase family. In terms of assembly, homodimer.

Its pathway is secondary metabolite biosynthesis; terpenoid biosynthesis. Its function is as follows. Part of the gene cluster B that mediates the biosynthesis of austinol and dehydroaustinol, two fungal meroterpenoids. The first step of the pathway is the synthesis of 3,5-dimethylorsellinic acid by the polyketide synthase ausA. 3,5-dimethylorsellinic acid is then prenylated by the polyprenyl transferase ausN. Further epoxidation by the FAD-dependent monooxygenase ausM and cyclization by the probable terpene cyclase ausL lead to the formation of protoaustinoid A. Protoaustinoid A is then oxidized to spiro-lactone preaustinoid A3 by the combined action of the FAD-binding monooxygenases ausB and ausC, and the dioxygenase ausE. Acid-catalyzed keto-rearrangement and ring contraction of the tetraketide portion of preaustinoid A3 by ausJ lead to the formation of preaustinoid A4. The aldo-keto reductase ausK, with the help of ausH, is involved in the next step by transforming preaustinoid A4 into isoaustinone which is in turn hydroxylated by the P450 monooxygenase ausI to form austinolide. Finally, the cytochrome P450 monooxygenase ausG modifies austinolide to austinol. Austinol can be further modified to dehydroaustinol which forms a diffusible complex with diorcinol that initiates conidiation. Due to genetic rearrangements of the clusters and the subsequent loss of some enzymes, the end products of the Emericella nidulans austinoid biosynthesis clusters are austinol and dehydroaustinol, even if additional enzymes, such as the O-acetyltransferase ausQ and the cytochrome P450 monooxygenase ausR are still functional. The chain is Austinoid biosynthesis clusters protein J from Emericella nidulans (strain FGSC A4 / ATCC 38163 / CBS 112.46 / NRRL 194 / M139) (Aspergillus nidulans).